A 268-amino-acid polypeptide reads, in one-letter code: GTP cyclohydrolase FolE2 (268 aa).

It belongs to the GTP cyclohydrolase IV family.

It catalyses the reaction GTP + H2O = 7,8-dihydroneopterin 3'-triphosphate + formate + H(+). It participates in cofactor biosynthesis; 7,8-dihydroneopterin triphosphate biosynthesis; 7,8-dihydroneopterin triphosphate from GTP: step 1/1. Converts GTP to 7,8-dihydroneopterin triphosphate. This is GTP cyclohydrolase FolE2 from Methylococcus capsulatus (strain ATCC 33009 / NCIMB 11132 / Bath).